The sequence spans 360 residues: Peptide chain release factor 1 (360 aa).

An N5-methylglutamine modification is found at glutamine 236.

Belongs to the prokaryotic/mitochondrial release factor family. In terms of processing, methylated by PrmC. Methylation increases the termination efficiency of RF1.

Its subcellular location is the cytoplasm. Functionally, peptide chain release factor 1 directs the termination of translation in response to the peptide chain termination codons UAG and UAA. The sequence is that of Peptide chain release factor 1 from Ligilactobacillus salivarius (strain UCC118) (Lactobacillus salivarius).